Here is a 271-residue protein sequence, read N- to C-terminus: Ribosomal RNA small subunit methyltransferase A (271 aa).

N28, L30, G54, E75, D99, and N117 together coordinate S-adenosyl-L-methionine.

This sequence belongs to the class I-like SAM-binding methyltransferase superfamily. rRNA adenine N(6)-methyltransferase family. RsmA subfamily.

The protein resides in the cytoplasm. It carries out the reaction adenosine(1518)/adenosine(1519) in 16S rRNA + 4 S-adenosyl-L-methionine = N(6)-dimethyladenosine(1518)/N(6)-dimethyladenosine(1519) in 16S rRNA + 4 S-adenosyl-L-homocysteine + 4 H(+). Its function is as follows. Specifically dimethylates two adjacent adenosines (A1518 and A1519) in the loop of a conserved hairpin near the 3'-end of 16S rRNA in the 30S particle. May play a critical role in biogenesis of 30S subunits. This is Ribosomal RNA small subunit methyltransferase A from Thermus thermophilus (strain ATCC 27634 / DSM 579 / HB8).